The chain runs to 121 residues: Large ribosomal subunit protein bL12 (121 aa).

This sequence belongs to the bacterial ribosomal protein bL12 family. As to quaternary structure, homodimer. Part of the ribosomal stalk of the 50S ribosomal subunit. Forms a multimeric L10(L12)X complex, where L10 forms an elongated spine to which 2 to 4 L12 dimers bind in a sequential fashion. Binds GTP-bound translation factors.

Its function is as follows. Forms part of the ribosomal stalk which helps the ribosome interact with GTP-bound translation factors. Is thus essential for accurate translation. The sequence is that of Large ribosomal subunit protein bL12 from Shewanella baltica (strain OS185).